Consider the following 562-residue polypeptide: Protein wntless (562 aa).

The Cytoplasmic segment spans residues 1–13; the sequence is MSGTILENLSGRK. Residues 14 to 34 form a helical membrane-spanning segment; it reads LSILVTTLLLCQVLCFLLGGL. The Lumenal segment spans residues 35 to 239; it reads YAPLPAGHVT…AIHQNGGFTQ (205 aa). Residue Asn-58 is glycosylated (N-linked (GlcNAc...) asparagine). The helical transmembrane segment at 240 to 260 threads the bilayer; the sequence is IWLLLKTVLFPFVVGIMIWFW. The Cytoplasmic portion of the chain corresponds to 261–270; sequence RRVHLLQRSP. Residues 271-291 form a helical membrane-spanning segment; the sequence is ALLEYMLIYLGAALTFLNLPL. Over 292–311 the chain is Lumenal; that stretch reads EYLSLVFEMPYMLLLSDIRQ. The chain crosses the membrane as a helical span at residues 312 to 332; the sequence is GIFYAMLLTFWLVFAGEHMLI. The Cytoplasmic portion of the chain corresponds to 333 to 344; that stretch reads QDAPNKSTIRSR. Residues 345–365 form a helical membrane-spanning segment; the sequence is YWKHLSAVVVGCISLFVFDIC. The Lumenal segment spans residues 366-390; that stretch reads ERGVQLRNPFYSIWAMPLAAKMAMT. Residues 391 to 411 traverse the membrane as a helical segment; sequence FIVLAGVSAAIYFLFLCYMIW. The Cytoplasmic segment spans residues 412-441; it reads KVFRNIGDKRTSLPSMSQARRLHYESLIYR. A helical membrane pass occupies residues 442–462; sequence FKFLMLATIVCAALTVTGFIM. Topologically, residues 463 to 482 are lumenal; sequence GQRAEGQWDWNDNVAIQPTS. The chain crosses the membrane as a helical span at residues 483 to 503; that stretch reads AFLTGVYGMWNIYIFALLILY. The Cytoplasmic portion of the chain corresponds to 504-562; it reads APSHKQWPTMHHSDETTQSNENIVASAASEEIEFSHLPSDSNPSEISSLTSFTRKVAFD. The disordered stretch occupies residues 539–562; the sequence is HLPSDSNPSEISSLTSFTRKVAFD. Over residues 541 to 556 the composition is skewed to polar residues; the sequence is PSDSNPSEISSLTSFT.

Belongs to the wntless family. In terms of assembly, interacts with wg; in the Golgi. Interacts with Vps35, a component of the retromer complex; wls stability is regulated by Vps35.

It is found in the presynaptic cell membrane. The protein resides in the postsynaptic cell membrane. Its subcellular location is the cell membrane. It localises to the endoplasmic reticulum membrane. The protein localises to the endosome membrane. It is found in the golgi apparatus membrane. Its function is as follows. A segment polarity gene required for wingless (wg)-dependent patterning processes, acting in both wg-sending cells and wg-target cells. In non-neuronal cells wls directs wg secretion. The wls traffic loop encompasses the Golgi, the cell surface, an endocytic compartment and a retrograde route leading back to the Golgi, and involves clathrin-mediated endocytosis and the retromer complex (a conserved protein complex consisting of Vps35 and Vps26). In neuronal cells (the larval motorneuron NMJ), the wg signal moves across the synapse via the release of wls-containing exosome-like vesicles. Postsynaptic wls is required for the trafficking of fz2 through the fz2-interacting protein Grip. This is Protein wntless from Drosophila erecta (Fruit fly).